A 162-amino-acid polypeptide reads, in one-letter code: Transcription elongation factor GreA (162 aa).

A coiled-coil region spans residues 45-74 (ENAEYEAAREKQAFIEGRIKELEDMTARAE).

It belongs to the GreA/GreB family.

Its function is as follows. Necessary for efficient RNA polymerase transcription elongation past template-encoded arresting sites. The arresting sites in DNA have the property of trapping a certain fraction of elongating RNA polymerases that pass through, resulting in locked ternary complexes. Cleavage of the nascent transcript by cleavage factors such as GreA or GreB allows the resumption of elongation from the new 3'terminus. GreA releases sequences of 2 to 3 nucleotides. This chain is Transcription elongation factor GreA, found in Rickettsia felis (strain ATCC VR-1525 / URRWXCal2) (Rickettsia azadi).